The chain runs to 529 residues: Tyrosinase (529 aa).

The first 18 residues, 1-18, serve as a signal peptide directing secretion; it reads MLLAVLYCLLWSFQTSAG. At 19–476 the chain is on the lumenal, melanosome side; that stretch reads HFPRACVSSK…YLEQASRIWS (458 aa). 3 N-linked (GlcNAc...) asparagine glycosylation sites follow: Asn-86, Asn-111, and Asn-161. His-180, His-202, and His-211 together coordinate Cu cation. N-linked (GlcNAc...) asparagine glycosylation occurs at Asn-230. Positions 287–313 are disordered; sequence SLCNGTPEGPLRRNPGNHDKSRTPRLP. The N-linked (GlcNAc...) asparagine glycan is linked to Asn-337. Positions 363 and 367 each coordinate Cu cation. An N-linked (GlcNAc...) asparagine glycan is attached at Asn-371. Residue His-390 coordinates Cu cation. A helical transmembrane segment spans residues 477–497; that stretch reads WLLGAAMVGAVLTALLAGLVS. The Cytoplasmic portion of the chain corresponds to 498-529; it reads LLCRHKRKQLPEEKQPLLMEKEDYHSLYQSHL.

This sequence belongs to the tyrosinase family. As to quaternary structure, forms an OPN3-dependent complex with DCT in response to blue light in melanocytes. The cofactor is Cu(2+). Post-translationally, glycosylated.

It localises to the melanosome membrane. It is found in the melanosome. The catalysed reaction is 2 L-dopa + O2 = 2 L-dopaquinone + 2 H2O. It catalyses the reaction L-tyrosine + O2 = L-dopaquinone + H2O. It carries out the reaction 2 5,6-dihydroxyindole-2-carboxylate + O2 = 2 indole-5,6-quinone-2-carboxylate + 2 H2O. In terms of biological role, this is a copper-containing oxidase that functions in the formation of pigments such as melanins and other polyphenolic compounds. Catalyzes the initial and rate limiting step in the cascade of reactions leading to melanin production from tyrosine. In addition to hydroxylating tyrosine to DOPA (3,4-dihydroxyphenylalanine), also catalyzes the oxidation of DOPA to DOPA-quinone, and possibly the oxidation of DHI (5,6-dihydroxyindole) to indole-5,6 quinone. The chain is Tyrosinase from Homo sapiens (Human).